A 373-amino-acid chain; its full sequence is tRNA-specific 2-thiouridylase MnmA (373 aa).

Residues 12–19 (GMSGGVDS) and Met-38 each bind ATP. Positions 98-100 (NPD) are interaction with target base in tRNA. The active-site Nucleophile is the Cys-103. Cysteines 103 and 200 form a disulfide. Gly-127 provides a ligand contact to ATP. Positions 150 to 152 (KDQ) are interaction with tRNA. Cys-200 (cysteine persulfide intermediate) is an active-site residue. The interaction with tRNA stretch occupies residues 312 to 313 (RY).

This sequence belongs to the MnmA/TRMU family.

The protein localises to the cytoplasm. The catalysed reaction is S-sulfanyl-L-cysteinyl-[protein] + uridine(34) in tRNA + AH2 + ATP = 2-thiouridine(34) in tRNA + L-cysteinyl-[protein] + A + AMP + diphosphate + H(+). In terms of biological role, catalyzes the 2-thiolation of uridine at the wobble position (U34) of tRNA, leading to the formation of s(2)U34. The chain is tRNA-specific 2-thiouridylase MnmA from Streptococcus uberis (strain ATCC BAA-854 / 0140J).